A 306-amino-acid polypeptide reads, in one-letter code: UDP-3-O-acyl-N-acetylglucosamine deacetylase (306 aa).

Residues H79, H238, and D242 each contribute to the Zn(2+) site. Residue H265 is the Proton donor of the active site.

The protein belongs to the LpxC family. It depends on Zn(2+) as a cofactor.

It catalyses the reaction a UDP-3-O-[(3R)-3-hydroxyacyl]-N-acetyl-alpha-D-glucosamine + H2O = a UDP-3-O-[(3R)-3-hydroxyacyl]-alpha-D-glucosamine + acetate. It functions in the pathway glycolipid biosynthesis; lipid IV(A) biosynthesis; lipid IV(A) from (3R)-3-hydroxytetradecanoyl-[acyl-carrier-protein] and UDP-N-acetyl-alpha-D-glucosamine: step 2/6. Its function is as follows. Catalyzes the hydrolysis of UDP-3-O-myristoyl-N-acetylglucosamine to form UDP-3-O-myristoylglucosamine and acetate, the committed step in lipid A biosynthesis. The sequence is that of UDP-3-O-acyl-N-acetylglucosamine deacetylase from Shewanella sp. (strain W3-18-1).